Reading from the N-terminus, the 305-residue chain is Glycine--tRNA ligase alpha subunit (305 aa).

Belongs to the class-II aminoacyl-tRNA synthetase family. As to quaternary structure, tetramer of two alpha and two beta subunits.

It localises to the cytoplasm. The catalysed reaction is tRNA(Gly) + glycine + ATP = glycyl-tRNA(Gly) + AMP + diphosphate. This Streptococcus suis (strain 98HAH33) protein is Glycine--tRNA ligase alpha subunit.